We begin with the raw amino-acid sequence, 208 residues long: Putative dioxygenase RF_0617 (208 aa).

This sequence belongs to the intradiol ring-cleavage dioxygenase family.

The polypeptide is Putative dioxygenase RF_0617 (Rickettsia felis (strain ATCC VR-1525 / URRWXCal2) (Rickettsia azadi)).